A 517-amino-acid polypeptide reads, in one-letter code: Glutamate--tRNA ligase (517 aa).

Positions 10 to 20 (PSPSGFLHVGG) match the 'HIGH' region motif. Positions 107, 109, 134, and 136 each coordinate Zn(2+). Residues 250-254 (KLSKR) carry the 'KMSKS' region motif. K253 serves as a coordination point for ATP.

This sequence belongs to the class-I aminoacyl-tRNA synthetase family. Glutamate--tRNA ligase type 1 subfamily. As to quaternary structure, monomer. Requires Zn(2+) as cofactor.

It is found in the cytoplasm. The enzyme catalyses tRNA(Glu) + L-glutamate + ATP = L-glutamyl-tRNA(Glu) + AMP + diphosphate. Catalyzes the attachment of glutamate to tRNA(Glu) in a two-step reaction: glutamate is first activated by ATP to form Glu-AMP and then transferred to the acceptor end of tRNA(Glu). This Leptospira biflexa serovar Patoc (strain Patoc 1 / ATCC 23582 / Paris) protein is Glutamate--tRNA ligase.